A 569-amino-acid chain; its full sequence is Anti-Muellerian hormone type-2 receptor (569 aa).

The N-terminal stretch at 1 to 17 (MLGTLGLWALLPAAVQA) is a signal peptide. At 18–148 (PPNRRTCVFF…AAPGESPWMA (131 aa)) the chain is on the extracellular side. 2 disulfides stabilise this stretch: C55-C79 and C92-C109. N66 is a glycosylation site (N-linked (GlcNAc...) asparagine). N119 is a glycosylation site (N-linked (GlcNAc...) asparagine). The helical transmembrane segment at 149-169 (LALLGLVLLLLLLLGGIVVAL) threads the bilayer. Over 170–569 (LQRKAYRVQS…PGAACASSDV (400 aa)) the chain is Cytoplasmic. Residues 201-511 (LCFSQVIREG…RLVALVHPQE (311 aa)) form the Protein kinase domain. Residues 207-215 (IREGGHAAV) and K228 each bind ATP. D331 acts as the Proton acceptor in catalysis. Residues 512–535 (AQPCPEGRPHSHPEDWPPAPAPAP) are disordered.

This sequence belongs to the protein kinase superfamily. TKL Ser/Thr protein kinase family. TGFB receptor subfamily. As to quaternary structure, interacts with type I receptor ACVR1. It depends on Mg(2+) as a cofactor. The cofactor is Mn(2+).

It localises to the membrane. It carries out the reaction L-threonyl-[receptor-protein] + ATP = O-phospho-L-threonyl-[receptor-protein] + ADP + H(+). It catalyses the reaction L-seryl-[receptor-protein] + ATP = O-phospho-L-seryl-[receptor-protein] + ADP + H(+). On ligand binding, forms a receptor complex consisting of two type II and two type I transmembrane serine/threonine kinases. Type II receptors phosphorylate and activate type I receptors which autophosphorylate, then bind and activate SMAD transcriptional regulators. Receptor for anti-Muellerian hormone. The polypeptide is Anti-Muellerian hormone type-2 receptor (AMHR2) (Oryctolagus cuniculus (Rabbit)).